Reading from the N-terminus, the 371-residue chain is tRNA-specific 2-thiouridylase MnmA (371 aa).

Residues 22-29 (GLSGGVDS) and Met-48 each bind ATP. An interaction with target base in tRNA region spans residues 108 to 110 (NPD). Residue Cys-113 is the Nucleophile of the active site. Cys-113 and Cys-209 form a disulfide bridge. Gly-137 is an ATP binding site. The tract at residues 159–161 (KDQ) is interaction with tRNA. The active-site Cysteine persulfide intermediate is the Cys-209.

The protein belongs to the MnmA/TRMU family.

The protein resides in the cytoplasm. The catalysed reaction is S-sulfanyl-L-cysteinyl-[protein] + uridine(34) in tRNA + AH2 + ATP = 2-thiouridine(34) in tRNA + L-cysteinyl-[protein] + A + AMP + diphosphate + H(+). Catalyzes the 2-thiolation of uridine at the wobble position (U34) of tRNA, leading to the formation of s(2)U34. This is tRNA-specific 2-thiouridylase MnmA from Coxiella burnetii (strain CbuG_Q212) (Coxiella burnetii (strain Q212)).